Here is an 831-residue protein sequence, read N- to C-terminus: Probable inactive serine/threonine-protein kinase DDB_G0274613 (831 aa).

An RING-type zinc finger spans residues 9–63; the sequence is CSICSEEVIDFAAIFSSNKKFGDKACKHNFCVSCLTYLMEYNTRNKKALCCPICR. Positions 83 to 348 form a coiled coil; the sequence is RKLSSAQIFL…LEEMKLLYQF (266 aa). The Protein kinase domain occupies 414–787; that stretch reads QIHKVSIGNG…ANQAAFHKFF (374 aa). The disordered stretch occupies residues 657-703; the sequence is NNNNNNNNNNNNNNNNNNNNNNNNNNNNNNNNNNNNNNNNNIESNFN.

This sequence belongs to the protein kinase superfamily. CMGC Ser/Thr protein kinase family.

In Dictyostelium discoideum (Social amoeba), this protein is Probable inactive serine/threonine-protein kinase DDB_G0274613.